We begin with the raw amino-acid sequence, 292 residues long: 2-(5''-triphosphoribosyl)-3'-dephosphocoenzyme-A synthase (292 aa).

Belongs to the CitG/MdcB family.

It catalyses the reaction 3'-dephospho-CoA + ATP = 2'-(5''-triphospho-alpha-D-ribosyl)-3'-dephospho-CoA + adenine. Catalyzes the formation of 2-(5''-triphosphoribosyl)-3'-dephosphocoenzyme-A, the precursor of the prosthetic group of the holo-acyl carrier protein (gamma chain) of citrate lyase, from ATP and dephospho-CoA. The sequence is that of 2-(5''-triphosphoribosyl)-3'-dephosphocoenzyme-A synthase from Escherichia coli O139:H28 (strain E24377A / ETEC).